The sequence spans 92 residues: Small ribosomal subunit protein uS19 (92 aa).

The protein belongs to the universal ribosomal protein uS19 family.

In terms of biological role, protein S19 forms a complex with S13 that binds strongly to the 16S ribosomal RNA. The polypeptide is Small ribosomal subunit protein uS19 (Geobacillus sp. (strain WCH70)).